The chain runs to 326 residues: Zinc transporter 11 (326 aa).

An N-terminal signal peptide occupies residues 1 to 20 (MSRSLVFFFLFLVLVVPCLS). Topologically, residues 21 to 49 (HGTGGDHDDDEASHVKSSDLKSKSLISVK) are extracellular. Residues 50 to 70 (IACLVIIFVLTFISGVSPYFL) form a helical membrane-spanning segment. The Cytoplasmic portion of the chain corresponds to 71 to 75 (KWSQG). A helical transmembrane segment spans residues 76 to 96 (FLVLGTQFAGGVFLATALMHF). Over 97–121 (LSDADETFRGLLTAEGESEPSPAYP) the chain is Extracellular. Residues 122 to 142 (FAYMLACAGFMLTMLADSVIA) form a helical membrane-spanning segment. Topologically, residues 143-174 (HIYSKTQNDLELQGEDKSNQRSATTETSIGDS) are cytoplasmic. A helical membrane pass occupies residues 175 to 195 (ILLIVALCFHSVFEGIAIGIS). Over 196-203 (ETKSDAWR) the chain is Extracellular. A helical transmembrane segment spans residues 204–224 (ALWTITLHKIFAAIAMGIALL). Over 225–235 (RMIPDRPLFSS) the chain is Cytoplasmic. A helical transmembrane segment spans residues 236–256 (ITYSFAFAISSPIGVAIGIVI). Over 257–262 (DATTQG) the chain is Extracellular. The helical transmembrane segment at 263–283 (SIADWIFALSMSLACGVFVYV) threads the bilayer. Over 284 to 305 (SVNHLLAKGYRPNKKVHVDEPR) the chain is Cytoplasmic. The chain crosses the membrane as a helical span at residues 306-326 (YKFLAVLFGVVVIAIVMIWDT).

The protein belongs to the ZIP transporter (TC 2.A.5) family.

Its subcellular location is the cell membrane. Functionally, probably mediates zinc uptake from the rhizosphere. This chain is Zinc transporter 11 (ZIP11), found in Arabidopsis thaliana (Mouse-ear cress).